Reading from the N-terminus, the 124-residue chain is Large-conductance mechanosensitive channel (124 aa).

3 consecutive transmembrane segments (helical) span residues 14 to 34 (VIDLAVGVIIGAAFTAIVQSL), 37 to 57 (NLINPLIGIFVGKIDLSNLVF), and 67 to 87 (GSFINSVINFLIISFVVFLIV).

This sequence belongs to the MscL family. As to quaternary structure, homopentamer.

It localises to the cell membrane. In terms of biological role, channel that opens in response to stretch forces in the membrane lipid bilayer. May participate in the regulation of osmotic pressure changes within the cell. The protein is Large-conductance mechanosensitive channel of Lactobacillus acidophilus (strain ATCC 700396 / NCK56 / N2 / NCFM).